A 367-amino-acid chain; its full sequence is Coiled-coil domain-containing protein 34 (367 aa).

A Phosphoserine modification is found at S55. Disordered stretches follow at residues 77–105 (FPFG…KVES), 191–228 (QKKN…KAKE), and 310–349 (YNPI…SSLA). Positions 82 to 97 (DDSEGEDEEALDEDAR) are enriched in acidic residues. Coiled-coil stretches lie at residues 87–108 (EDEE…SLEG) and 153–280 (RLQQ…AKNK). Positions 197 to 228 (ERKEREQKINKEMEEKEAKKREKEHLQEKAKE) are enriched in basic and acidic residues. A compositionally biased stretch (low complexity) spans 339–349 (ASQPLPSSSLA).

In terms of tissue distribution, expressed in testis and sperm.

It is found in the cell projection. It localises to the cilium. The protein localises to the flagellum. In terms of biological role, involved in spermatogenesis. Has a probable role in anterograde intraflagellar transport which is essential for the formation of sperm flagella. The protein is Coiled-coil domain-containing protein 34 (Ccdc34) of Mus musculus (Mouse).